A 476-amino-acid chain; its full sequence is ATP synthase subunit beta (476 aa).

An ATP-binding site is contributed by G162–T169.

Belongs to the ATPase alpha/beta chains family. F-type ATPases have 2 components, CF(1) - the catalytic core - and CF(0) - the membrane proton channel. CF(1) has five subunits: alpha(3), beta(3), gamma(1), delta(1), epsilon(1). CF(0) has three main subunits: a(1), b(2) and c(9-12). The alpha and beta chains form an alternating ring which encloses part of the gamma chain. CF(1) is attached to CF(0) by a central stalk formed by the gamma and epsilon chains, while a peripheral stalk is formed by the delta and b chains.

It is found in the cell membrane. It catalyses the reaction ATP + H2O + 4 H(+)(in) = ADP + phosphate + 5 H(+)(out). Functionally, produces ATP from ADP in the presence of a proton gradient across the membrane. The catalytic sites are hosted primarily by the beta subunits. This chain is ATP synthase subunit beta, found in Mycoplasma capricolum subsp. capricolum (strain California kid / ATCC 27343 / NCTC 10154).